Consider the following 53-residue polypeptide: UPF0391 membrane protein ESA_03375 (53 aa).

A run of 2 helical transmembrane segments spans residues 4 to 24 (WGII…GGLA) and 28 to 48 (AGAA…SLFM).

The protein belongs to the UPF0391 family.

The protein resides in the cell membrane. The chain is UPF0391 membrane protein ESA_03375 from Cronobacter sakazakii (strain ATCC BAA-894) (Enterobacter sakazakii).